The sequence spans 254 residues: UPF0246 protein FTF1693c (254 aa).

It belongs to the UPF0246 family.

The sequence is that of UPF0246 protein FTF1693c from Francisella tularensis subsp. tularensis (strain FSC 198).